We begin with the raw amino-acid sequence, 249 residues long: tRNA (guanine-N(1)-)-methyltransferase (249 aa).

S-adenosyl-L-methionine-binding positions include Gly-113 and 133-138 (IGDFVL).

This sequence belongs to the RNA methyltransferase TrmD family. As to quaternary structure, homodimer.

The protein localises to the cytoplasm. The catalysed reaction is guanosine(37) in tRNA + S-adenosyl-L-methionine = N(1)-methylguanosine(37) in tRNA + S-adenosyl-L-homocysteine + H(+). Its function is as follows. Specifically methylates guanosine-37 in various tRNAs. This Aliivibrio fischeri (strain ATCC 700601 / ES114) (Vibrio fischeri) protein is tRNA (guanine-N(1)-)-methyltransferase.